A 389-amino-acid polypeptide reads, in one-letter code: Phospho-N-acetylmuramoyl-pentapeptide-transferase (389 aa).

The next 10 helical transmembrane spans lie at 25 to 45 (RAVMATITALVIGLVCGPWVI), 73 to 93 (TMGGVLILIGIAVATLLWGDL), 97 to 117 (FIWIVMLVTFGFGVIGWVDDY), 135 to 155 (FWQSVIGLFAAVYLAFSVSEA), 190 to 210 (ISYPLGVWGFIALTYFVIVGA), 222 to 242 (GLVIMPVVLVGASLGVFAYVM), 258 to 278 (GAGELLIFCSAMGGAGLAFLW), 286 to 306 (VFMGDVGALALGGALGTVAVI), 311 to 331 (IVLFIMGGIFVAETLSVMLQV), and 366 to 386 (QVVVRFWIITLMLCLFGLSTL).

Belongs to the glycosyltransferase 4 family. MraY subfamily. The cofactor is Mg(2+).

The protein localises to the cell inner membrane. It carries out the reaction UDP-N-acetyl-alpha-D-muramoyl-L-alanyl-gamma-D-glutamyl-meso-2,6-diaminopimeloyl-D-alanyl-D-alanine + di-trans,octa-cis-undecaprenyl phosphate = di-trans,octa-cis-undecaprenyl diphospho-N-acetyl-alpha-D-muramoyl-L-alanyl-D-glutamyl-meso-2,6-diaminopimeloyl-D-alanyl-D-alanine + UMP. It functions in the pathway cell wall biogenesis; peptidoglycan biosynthesis. Its function is as follows. Catalyzes the initial step of the lipid cycle reactions in the biosynthesis of the cell wall peptidoglycan: transfers peptidoglycan precursor phospho-MurNAc-pentapeptide from UDP-MurNAc-pentapeptide onto the lipid carrier undecaprenyl phosphate, yielding undecaprenyl-pyrophosphoryl-MurNAc-pentapeptide, known as lipid I. This Burkholderia pseudomallei (strain 1106a) protein is Phospho-N-acetylmuramoyl-pentapeptide-transferase.